The primary structure comprises 182 residues: Ribosome maturation factor RimM (182 aa).

One can recognise a PRC barrel domain in the interval 102-182 (EEGDYYWKDL…TIEVDWDPGF (81 aa)).

Belongs to the RimM family. As to quaternary structure, binds ribosomal protein uS19.

Its subcellular location is the cytoplasm. An accessory protein needed during the final step in the assembly of 30S ribosomal subunit, possibly for assembly of the head region. Essential for efficient processing of 16S rRNA. May be needed both before and after RbfA during the maturation of 16S rRNA. It has affinity for free ribosomal 30S subunits but not for 70S ribosomes. This Salmonella enteritidis PT4 (strain P125109) protein is Ribosome maturation factor RimM.